We begin with the raw amino-acid sequence, 259 residues long: Indole-diterpene biosynthesis cluster protein S (259 aa).

The next 5 helical transmembrane spans lie at 5-25 (EASG…GMVW), 64-84 (WFAL…AIIL), 87-107 (VYLI…LWVL), 134-154 (VLWF…AASF), and 221-241 (LGAG…PAAG).

Belongs to the ltmS family.

It localises to the membrane. Part of the gene cluster that mediates the biosynthesis of paspalitrems, indole-diterpene (IDT) mycotoxins that are potent tremorgens in mammals. The geranylgeranyl diphosphate (GGPP) synthase idtG is proposed to catalyze the first step in IDT biosynthesis via catalysis of a series of iterative condensations of isopentenyl diphosphate (IPP) with dimethylallyl diphosphate (DMAPP), geranyl diphosphate (GPP), and farnesyl diphosphate (FPP), to form GGPP. Condensation of indole-3-glycerol phosphate with GGPP by the prenyltransferase idtC then forms 3-geranylgeranylindole (3-GGI). Epoxidation of the two terminal alkenes of the geranylgeranyl moiety by the FAD-dependent monooxygenase idtM, and cyclization by the terpene cyclase idtB then leads to the production of paspaline. The cytochrome P450 monooxygenase idtP then catalyzes oxidative elimination of the pendant methyl group at C-12 of paspaline and generates the C-10 ketone to yield 13-desoxypaxilline. The cytochrome P450 monooxygenase idtQ may catalyze the C-13 oxidation of 13-desoxypaxilline to afford paxilline. Considering that both paspalicine and paxilline were detected in C.paspali, idtQ also catalyzes the formation of paspalinine from 13-desoxypaxilline via paspalicine as an intermediate. Finally, the alpha-prenyltransferase idtF prenylates paspalinine at the C-20 or the C-21 positions to yield paspalitrems A and C, respectively. The hydroxylation of paspalitrem A at C-32 by a still unknown oxidase affords paspalitrem B. In Claviceps paspali (Rye ergot fungus), this protein is Indole-diterpene biosynthesis cluster protein S.